The sequence spans 654 residues: Hepatocyte growth factor activator serine proteases (654 aa).

The N-terminal stretch at 1–33 is a signal peptide; it reads MGRWAWGPSLCPLPGMALLLLLLLLLVPHGAQP. The segment at 34 to 100 is disordered; that stretch reads QAGGNLTEPP…SSSPGDPVLT (67 aa). Positions 34-370 are cleaved as a propeptide — removed in mature form; sequence QAGGNLTEPP…RLAACESLAR (337 aa). Residues N38 and N46 are each glycosylated (N-linked (GlcNAc...) asparagine). Residues 57–81 are compositionally biased toward low complexity; the sequence is PVTSVTPVTPATSAPEAQGPRGRGL. Residues 101-148 form the Fibronectin type-II domain; it reads VDGQPCRFPFRYGGRMLHACTSEGSAHRKWCATTHNYDRDRAWGYCVQ. Intrachain disulfides connect C106–C131, C120–C146, C162–C173, C167–C184, C186–C195, C200–C228, C226–C235, C243–C254, C248–C265, C267–C276, C284–C365, C305–C347, C336–C360, C393–C520, C431–C447, C439–C509, C534–C603, C566–C582, and C593–C621. One can recognise an EGF-like 1 domain in the interval 158–196; that stretch reads ALDSCASSPCLNGGSCSHTQDPGSYHCTCPMAFTGRNCD. A Fibronectin type-I domain is found at 198–238; sequence EKCFDETRYEHLEAGDRWARVSQGQVEQCECAGGQIRCEGT. Residues 239–277 form the EGF-like 2 domain; the sequence is RHTACLSSPCLNGGTCHLIVATGTTVCSCPPGHAGRLCN. The Kringle domain maps to 283–365; it reads RCFVGNGTEY…SWEYCRLAAC (83 aa). N-linked (GlcNAc...) asparagine glycosylation is present at N288. Residues 407-645 form the Peptidase S1 domain; that stretch reads IIGGSSSLPG…YVDWIKDRIW (239 aa). H446 acts as the Charge relay system in catalysis. 2 N-linked (GlcNAc...) asparagine glycosylation sites follow: N467 and N491. The active-site Charge relay system is D496. N-linked (GlcNAc...) asparagine glycosylation is present at N545. The Charge relay system role is filled by S597.

It belongs to the peptidase S1 family. In terms of assembly, heterodimer of a short chain and a long chain linked by a disulfide bond. In terms of processing, the active form of HGFAC presents in the serum is derived from the COOH-terminal region of the precursor by the cleavage of bonds between Arg-370 and Ile-371 and Arg-406 and Ile-407. In terms of tissue distribution, liver.

The protein resides in the secreted. Serine protease that hydrolyzes the inactive zymogen hepatocyte growth factor (HGFsc) to an activated disulfide-linked heterodimer, then initiating hepatocyte growth factor receptor signaling pathway. In Canis lupus familiaris (Dog), this protein is Hepatocyte growth factor activator serine proteases (HGFAC).